Consider the following 278-residue polypeptide: Secoisolariciresinol dehydrogenase (278 aa).

NAD(+) is bound by residues G23–I28, D47, V73, and N99. Residues S104 and S164 each coordinate substrate. Residue Y167 is the Proton donor/acceptor of the active site. K171 and V200 together coordinate NAD(+).

Belongs to the short-chain dehydrogenases/reductases (SDR) family. Homotetramer.

The catalysed reaction is (-)-secoisolariciresinol + 2 NAD(+) = (-)-matairesinol + 2 NADH + 2 H(+). Oxidoreductase involved in lignan biosynthesis. Catalyzes the stereospecific conversion of (-)-secoisolariciresinol to (-)-matairesinol via a lactol intermediate. This is Secoisolariciresinol dehydrogenase from Podophyllum peltatum (American mandrake).